The following is a 121-amino-acid chain: Large ribosomal subunit protein uL14 (121 aa).

It belongs to the universal ribosomal protein uL14 family. In terms of assembly, part of the 50S ribosomal subunit. Forms a cluster with proteins L3 and L19. In the 70S ribosome, L14 and L19 interact and together make contacts with the 16S rRNA in bridges B5 and B8.

Functionally, binds to 23S rRNA. Forms part of two intersubunit bridges in the 70S ribosome. The sequence is that of Large ribosomal subunit protein uL14 from Pseudoalteromonas atlantica (strain T6c / ATCC BAA-1087).